The sequence spans 1001 residues: Open rectifier potassium channel protein 1 (1001 aa).

The Cytoplasmic portion of the chain corresponds to 1–6 (MSPNRW). A helical membrane pass occupies residues 7 to 27 (ILLLIFYISYLMFGAAIYYHI). Asparagine 58 carries an N-linked (GlcNAc...) asparagine glycan. The pore-forming intramembrane region spans 95-111 (AFFFAFTVCSTVGYGNI). The helical transmembrane segment at 120-140 (MIMIAYSVIGIPVNGILFAGL) threads the bilayer. The Cytoplasmic segment spans residues 141–170 (GEYFGRTFEAIYRRYKKYKMSTDMHYVPPQ). Residues 171 to 191 (LGLITTVVIALIPGIALFLLL) traverse the membrane as a helical segment. Residues 208 to 224 (LYYSYVTTTTIGFGDYV) constitute an intramembrane region (pore-forming). Residues 244 to 264 (IFVIVWFIFSLGYLVMIMTFI) traverse the membrane as a helical segment. The Cytoplasmic segment spans residues 265–1001 (TRGLQSKKLA…TGSSGAPAEK (737 aa)). Phosphoserine is present on residues serine 332, serine 373, serine 562, and serine 565. Residues 591–668 (SQSYLRNGRG…QAPSARRGSM (78 aa)) are disordered. A phosphoserine mark is found at serine 685, serine 691, and serine 715. 2 disordered regions span residues 768–795 (GGAA…EPPQ) and 830–1001 (SPTG…PAEK). A compositionally biased stretch (low complexity) spans 832–841 (TGGAATAPAA). The segment covering 855-873 (AANQSQITAGPSNAPTVQS) has biased composition (polar residues). Low complexity predominate over residues 911–926 (RRLSLRPSPLARELSP). Polar residues predominate over residues 961–983 (RPSTSSTHSPLSRIVQISQAQRK). The span at 984 to 1001 (SSMPSAAATGSSGAPAEK) shows a compositional bias: low complexity.

This sequence belongs to the two pore domain potassium channel (TC 1.A.1.8) family. As to expression, widespread expression in adult, strongest expression in muscle, brain and ovary. Also present at low levels in larva and embryo.

It is found in the membrane. Background potassium channel. Rectification is dependent on external potassium concentration. Acts as an outwardly rectifying channel but as external potassium levels increase, this is reversed. The chain is Open rectifier potassium channel protein 1 (Ork1) from Drosophila melanogaster (Fruit fly).